A 235-amino-acid polypeptide reads, in one-letter code: STARD3 N-terminal-like protein (235 aa).

Residue M1 is modified to N-acetylmethionine. A disordered region spans residues 1–20; the sequence is MNHLPEHMENTLTGSQSSHA. Residues 1-53 are Cytoplasmic-facing; that stretch reads MNHLPEHMENTLTGSQSSHASLRDIHSINPAQLMARIESYEGREKKGISDVRR. A compositionally biased stretch (polar residues) spans 10 to 20; the sequence is NTLTGSQSSHA. A phosphoserine mark is found at S15, S21, and S27. Residues 48–218 form the MENTAL domain; the sequence is ISDVRRTFCL…YSPPESEAGS (171 aa). A helical transmembrane segment spans residues 54-74; the sequence is TFCLFVTFDLLFVTLLWIIEL. Topologically, residues 75–97 are extracellular; the sequence is NVNGGIENTLKKEVIHYDYYSSY. The chain crosses the membrane as a helical span at residues 98 to 118; the sequence is FDIFLLAVFRFKVLILGYAVC. Residues 119-122 lie on the Cytoplasmic side of the membrane; it reads RLRH. Residues 123–143 traverse the membrane as a helical segment; it reads WWAIALTTAVTSAFLLAKVIL. At 144-150 the chain is on the extracellular side; it reads SKLFSQG. A helical transmembrane segment spans residues 151 to 171; it reads AFGYVLPIISFILAWIETWFL. The Cytoplasmic segment spans residues 172–235; sequence DFKVLPQEAE…QESEKPLLEL (64 aa). Residue S193 is modified to Phosphoserine. A disordered region spans residues 202–235; it reads GLSDGQFYSPPESEAGSEEEAEEKQESEKPLLEL. The FFAT signature appears at 208–213; it reads FYSPPE. Over residues 225–235 the composition is skewed to basic and acidic residues; it reads KQESEKPLLEL.

It belongs to the STARD3 family. Homodimer. Interacts (via the MENTAL domain) with STARD3NL. Interacts (via FFAT motif) with VAPA. Interacts (via FFAT motif) with VAPB. Interacts (via FFAT motif) with MOSPD2 (via MSP domain).

Its subcellular location is the late endosome membrane. Its function is as follows. Tethering protein that creates contact site between the endoplasmic reticulum and late endosomes: localizes to late endosome membranes and contacts the endoplasmic reticulum via interaction with VAPA and VAPB. The chain is STARD3 N-terminal-like protein from Mus musculus (Mouse).